Here is a 136-residue protein sequence, read N- to C-terminus: MARTKQTARKSTGAKAPRKQLASKAARKSAPATGGIKKPHRFRPGTVALREIRKYQKSTDLLIRKLPFQRLVRDIAHEFKAELRFQSSAVLALQEAAEAYLVGLFEDTNLCAIHARRVTIMTKDMQLARRIRGERF.

The interval 1-43 is disordered; it reads MARTKQTARKSTGAKAPRKQLASKAARKSAPATGGIKKPHRFR. An N6,N6,N6-trimethyllysine; alternate mark is found at Lys-5 and Lys-10. Lys-5 bears the N6,N6-dimethyllysine; alternate mark. Lys-5 and Lys-10 each carry N6-acetyllysine; alternate. An N6-methyllysine; alternate modification is found at Lys-5. Ser-11 is modified (phosphoserine). Residues Lys-15, Lys-19, and Lys-24 each carry the N6-acetyllysine modification. 2 positions are modified to N6,N6,N6-trimethyllysine; alternate: Lys-28 and Lys-37. N6,N6-dimethyllysine; alternate is present on residues Lys-28 and Lys-37. 3 positions are modified to N6-acetyllysine; alternate: Lys-28, Lys-37, and Lys-57. 3 positions are modified to N6-methyllysine; alternate: Lys-28, Lys-37, and Lys-57. N6-methyllysine is present on Lys-80.

This sequence belongs to the histone H3 family. The nucleosome is a histone octamer containing two molecules each of H2A, H2B, H3 and H4 assembled in one H3-H4 heterotetramer and two H2A-H2B heterodimers. The octamer wraps approximately 147 bp of DNA. Phosphorylated to form H3S10ph. H3S10ph promotes subsequent H3K14ac formation by GCN5. H3S10ph is only found in the mitotically dividing MIC, but not in the amitotically dividing MAC. H3S10ph is correlated with chromosome condensation during mitotic or meiotic micronuclear divisions. Post-translationally, acetylation of histone H3 leads to transcriptional activation. H3K14ac formation by GCN5 is promoted by H3S10ph. H3K9acK14ac is the preferred acetylated form of newly synthesized H3. Acetylation occurs almost exclusively in the MAC. In terms of processing, methylated to form H3K4me. H3K4me is only found in the transcriptionally active MAC. Methylated to form H3K9me in developing MACs during conjugation, when genome-wide DNA elimination occurs. At this stage, H3K9me specifically occurs on DNA sequences being eliminated (IES), probably targeted by small scan RNAs (scnRNAs) bound to IES, and is required for efficient IES elimination. H3K9me is required for the interaction with the chromodomains of PDD1 and PDD3. The full-length protein H3S (slow migrating) is converted to H3F (fast migrating) by proteolytic removal of the first 6 residues. H3F is unique to MIC, and processing seems to occur regularly each generation at a specific point in the cell cycle.

It localises to the nucleus. The protein resides in the chromosome. In terms of biological role, core component of nucleosome. Nucleosomes wrap and compact DNA into chromatin, limiting DNA accessibility to the cellular machineries which require DNA as a template. Histones thereby play a central role in transcription regulation, DNA repair, DNA replication and chromosomal stability. DNA accessibility is regulated via a complex set of post-translational modifications of histones, also called histone code, and nucleosome remodeling. In Tetrahymena pyriformis, this protein is Histone H3.